The primary structure comprises 228 residues: Putative N-acetylmannosamine-6-phosphate 2-epimerase (228 aa).

This sequence belongs to the NanE family.

The enzyme catalyses an N-acyl-D-glucosamine 6-phosphate = an N-acyl-D-mannosamine 6-phosphate. It functions in the pathway amino-sugar metabolism; N-acetylneuraminate degradation; D-fructose 6-phosphate from N-acetylneuraminate: step 3/5. Its function is as follows. Converts N-acetylmannosamine-6-phosphate (ManNAc-6-P) to N-acetylglucosamine-6-phosphate (GlcNAc-6-P). The sequence is that of Putative N-acetylmannosamine-6-phosphate 2-epimerase from Mycoplasmopsis pulmonis (strain UAB CTIP) (Mycoplasma pulmonis).